Here is a 397-residue protein sequence, read N- to C-terminus: Cystinosin (397 aa).

The first 24 residues, 1–24 (MDFSTHRLTTLLLLLLATVALGNA), serve as a signal peptide directing secretion. Residues 25–126 (QSSQLTVDSH…FVRVTVAKSR (102 aa)) are Lumenal-facing. N-linked (GlcNAc...) asparagine glycosylation is found at N43 and N86. The chain crosses the membrane as a helical span at residues 127–147 (ALIYTSIIFGWVYFVAWSVSF). The PQ-loop 1 domain occupies 132–187 (SIIFGWVYFVAWSVSFYPQIWSNYRRKSVEGLNFDFLALNIVGFTLYSMFNCGLYF). Residues 148–167 (YPQIWSNYRRKSVEGLNFDF) are Cytoplasmic-facing. The chain crosses the membrane as a helical span at residues 168–188 (LALNIVGFTLYSMFNCGLYFI). Over 189–210 (EDLQNEYEVRYPLGVNPVMLND) the chain is Lumenal. Residues 211-231 (VVFSLHAMFATCITILQCFFY) traverse the membrane as a helical segment. Over 232–239 (QRAQQRVS) the chain is Cytoplasmic. A helical transmembrane segment spans residues 240–260 (FIAYGILAIFAVVVVVSAGLA). Over 261–263 (GGS) the chain is Lumenal. A helical membrane pass occupies residues 264-284 (VIHWLDFLYYCSYVKLTITII). The region spanning 271-327 (LYYCSYVKLTITIIKYVPQALMNYRRKSTSGWSIGNILLDFTGGTLSMLQMILNAHN) is the PQ-loop 2 domain. Residues 285–302 (KYVPQALMNYRRKSTSGW) are Cytoplasmic-facing. The helical transmembrane segment at 303–323 (SIGNILLDFTGGTLSMLQMIL) threads the bilayer. Residues 324–340 (NAHNYDDWVSIFGDPTK) are Lumenal-facing. Residues 341-361 (FGLGLFSVLFDVFFMLQHYVF) form a helical membrane-spanning segment. Residues 362–397 (YRHSRESSSSDLTTVTDVQNRTNESPPPSEVTTEKY) lie on the Cytoplasmic side of the membrane. Polar residues predominate over residues 373–385 (LTTVTDVQNRTNE). The tract at residues 373–397 (LTTVTDVQNRTNESPPPSEVTTEKY) is disordered.

It belongs to the cystinosin family.

The protein resides in the lysosome membrane. It carries out the reaction L-cystine(out) + H(+)(out) = L-cystine(in) + H(+)(in). In terms of biological role, cystine/H(+) symporter that mediates export of cystine, the oxidized dimer of cysteine, from lysosomes. Involved in cysteine homeostasis during periods of fasting, which indirectly regulates mTORC1-mediated signaling by supporting de novo CoA synthesis, the TCA cycle and amino acid metabolism during periods of food shortage. Important for maintaining autophagy, and for development and survival during periods of fasting. The sequence is that of Cystinosin from Drosophila melanogaster (Fruit fly).